A 375-amino-acid chain; its full sequence is Erythronate-4-phosphate dehydrogenase (375 aa).

Positions 45 and 66 each coordinate substrate. Residues D146 and T175 each contribute to the NAD(+) site. R208 is a catalytic residue. D232 contributes to the NAD(+) binding site. The active site involves E237. Catalysis depends on H254, which acts as the Proton donor. G257 provides a ligand contact to NAD(+). Y258 contributes to the substrate binding site.

The protein belongs to the D-isomer specific 2-hydroxyacid dehydrogenase family. PdxB subfamily. Homodimer.

The protein localises to the cytoplasm. The catalysed reaction is 4-phospho-D-erythronate + NAD(+) = (R)-3-hydroxy-2-oxo-4-phosphooxybutanoate + NADH + H(+). The protein operates within cofactor biosynthesis; pyridoxine 5'-phosphate biosynthesis; pyridoxine 5'-phosphate from D-erythrose 4-phosphate: step 2/5. Its function is as follows. Catalyzes the oxidation of erythronate-4-phosphate to 3-hydroxy-2-oxo-4-phosphonooxybutanoate. This is Erythronate-4-phosphate dehydrogenase from Yersinia pseudotuberculosis serotype O:1b (strain IP 31758).